A 269-amino-acid polypeptide reads, in one-letter code: Phosphonoacetaldehyde hydrolase (269 aa).

D10 functions as the Nucleophile in the catalytic mechanism. Residues D10 and A12 each contribute to the Mg(2+) site. K52 acts as the Schiff-base intermediate with substrate in catalysis. D186 contacts Mg(2+).

Belongs to the HAD-like hydrolase superfamily. PhnX family. As to quaternary structure, homodimer. Mg(2+) is required as a cofactor.

It carries out the reaction phosphonoacetaldehyde + H2O = acetaldehyde + phosphate + H(+). Its function is as follows. Involved in phosphonate degradation. The chain is Phosphonoacetaldehyde hydrolase (phnX) from Salmonella typhimurium (strain LT2 / SGSC1412 / ATCC 700720).